We begin with the raw amino-acid sequence, 306 residues long: Nuclear egress protein 1 (306 aa).

Positions 1–49 are disordered; the sequence is MYDTDPHRRGSRPGPYHGKERRRSRSSAAGGTLGVVRRASRKSLPPHAR. The CCCH-type zinc-finger motif lies at 106–225; that stretch reads CLTLSGMGYY…YVIFPGTSAH (120 aa).

The protein belongs to the herpesviridae NEC1 protein family. As to quaternary structure, forms a heterohexameric complex with NEC2. Interacts with capsid vertex specific component 2/CVC2; this interaction directs the capsid to the host inner nuclear membrane to initiate budding. Post-translationally, phosphorylated at serine residues in the N-terminus. This phosphorylation regulates the localization within the inner nuclear membrane.

It localises to the host nucleus inner membrane. In terms of biological role, plays an essential role in virion nuclear egress, the first step of virion release from infected cell. Within the host nucleus, NEC1 interacts with the newly formed capsid through the vertexes and directs it to the inner nuclear membrane by associating with NEC2. Induces the budding of the capsid at the inner nuclear membrane as well as its envelopment into the perinuclear space. There, the NEC1/NEC2 complex promotes the fusion of the enveloped capsid with the outer nuclear membrane and the subsequent release of the viral capsid into the cytoplasm where it will reach the secondary budding sites in the host Golgi or trans-Golgi network. The sequence is that of Nuclear egress protein 1 from Human herpesvirus 1 (strain 17) (HHV-1).